We begin with the raw amino-acid sequence, 252 residues long: Serine/threonine phosphatase stp (252 aa).

The segment covering 1–18 has biased composition (basic and acidic residues); sequence MHAEFRTDRGRIRHHNED. Residues 1-23 are disordered; it reads MHAEFRTDRGRIRHHNEDNGGVF. Positions 2 to 242 constitute a PPM-type phosphatase domain; the sequence is HAEFRTDRGR…DNITVLLVER (241 aa). Mn(2+)-binding residues include Asp-36, Gly-37, Asp-194, and Asp-233.

It belongs to the PP2C family. Mn(2+) serves as cofactor.

The protein localises to the cytoplasm. The protein resides in the membrane. It catalyses the reaction O-phospho-L-seryl-[protein] + H2O = L-seryl-[protein] + phosphate. The enzyme catalyses O-phospho-L-threonyl-[protein] + H2O = L-threonyl-[protein] + phosphate. Functionally, protein phosphatase that dephosphorylates EF-Tu. This chain is Serine/threonine phosphatase stp (stp), found in Listeria welshimeri serovar 6b (strain ATCC 35897 / DSM 20650 / CCUG 15529 / CIP 8149 / NCTC 11857 / SLCC 5334 / V8).